A 188-amino-acid chain; its full sequence is NADH-quinone oxidoreductase subunit I (188 aa).

2 consecutive 4Fe-4S ferredoxin-type domains span residues leucine 44–alanine 74 and glutamine 90–glutamate 119. The [4Fe-4S] cluster site is built by cysteine 54, cysteine 57, cysteine 60, cysteine 64, cysteine 99, cysteine 102, cysteine 105, and cysteine 109. The tract at residues threonine 167 to proline 188 is disordered. Over residues aspartate 176–proline 188 the composition is skewed to acidic residues.

The protein belongs to the complex I 23 kDa subunit family. As to quaternary structure, NDH-1 is composed of 14 different subunits. Subunits NuoA, H, J, K, L, M, N constitute the membrane sector of the complex. The cofactor is [4Fe-4S] cluster.

The protein localises to the cell membrane. It carries out the reaction a quinone + NADH + 5 H(+)(in) = a quinol + NAD(+) + 4 H(+)(out). NDH-1 shuttles electrons from NADH, via FMN and iron-sulfur (Fe-S) centers, to quinones in the respiratory chain. The immediate electron acceptor for the enzyme in this species is believed to be ubiquinone. Couples the redox reaction to proton translocation (for every two electrons transferred, four hydrogen ions are translocated across the cytoplasmic membrane), and thus conserves the redox energy in a proton gradient. The polypeptide is NADH-quinone oxidoreductase subunit I (Rhodococcus jostii (strain RHA1)).